The sequence spans 1071 residues: Carbamoyl phosphate synthase pyrimidine-specific large chain (1071 aa).

Residues 1-401 (MPKRVDINKI…SLLKAVRSLE (401 aa)) form a carboxyphosphate synthetic domain region. ATP is bound by residues R129, R169, G175, G176, K208, I210, E215, G241, I242, H243, Q284, and E298. The region spanning 133–327 (RTLMNELNEP…IAKLAAKIAV (195 aa)) is the ATP-grasp 1 domain. Mg(2+)-binding residues include Q284, E298, and N300. Mn(2+) contacts are provided by Q284, E298, and N300. The oligomerization domain stretch occupies residues 402–546 (ADVYHLELKD…YSTYEEENES (145 aa)). The interval 547 to 929 (VVTDKKSVMV…ALYKALIASG (383 aa)) is carbamoyl phosphate synthetic domain. The ATP-grasp 2 domain maps to 671 to 861 (EQALGELGVP…MANLATKIIL (191 aa)). Residues R707, R746, L748, E752, G777, V778, H779, S780, Q820, and E832 each coordinate ATP. 3 residues coordinate Mg(2+): Q820, E832, and N834. Mn(2+) contacts are provided by Q820, E832, and N834. One can recognise an MGS-like domain in the interval 930–1071 (IQIPNYGSVL…NTNQEAAVTI (142 aa)). Residues 930–1071 (IQIPNYGSVL…NTNQEAAVTI (142 aa)) are allosteric domain.

Belongs to the CarB family. As to quaternary structure, composed of two chains; the small (or glutamine) chain promotes the hydrolysis of glutamine to ammonia, which is used by the large (or ammonia) chain to synthesize carbamoyl phosphate. Tetramer of heterodimers (alpha,beta)4. Interacts with BrxC. Mg(2+) is required as a cofactor. Mn(2+) serves as cofactor.

The catalysed reaction is hydrogencarbonate + L-glutamine + 2 ATP + H2O = carbamoyl phosphate + L-glutamate + 2 ADP + phosphate + 2 H(+). The enzyme catalyses hydrogencarbonate + NH4(+) + 2 ATP = carbamoyl phosphate + 2 ADP + phosphate + 2 H(+). It participates in amino-acid biosynthesis; L-arginine biosynthesis; carbamoyl phosphate from bicarbonate: step 1/1. It functions in the pathway pyrimidine metabolism; UMP biosynthesis via de novo pathway; (S)-dihydroorotate from bicarbonate: step 1/3. In terms of biological role, small subunit of the glutamine-dependent carbamoyl phosphate synthetase (CPSase). CPSase catalyzes the formation of carbamoyl phosphate from the ammonia moiety of glutamine, carbonate, and phosphate donated by ATP, constituting the first step of the biosynthetic pathway leading to pyrimidine nucleotides. The large subunit (synthetase) binds the substrates ammonia (free or transferred from glutamine from the small subunit), hydrogencarbonate and ATP and carries out an ATP-coupled ligase reaction, activating hydrogencarbonate by forming carboxy phosphate which reacts with ammonia to form carbamoyl phosphate. This is Carbamoyl phosphate synthase pyrimidine-specific large chain (pyrAB) from Bacillus subtilis (strain 168).